We begin with the raw amino-acid sequence, 105 residues long: Flagellar transcriptional regulator FlhD (105 aa).

It belongs to the FlhD family. Homodimer; disulfide-linked. Forms a heterohexamer composed of two FlhC and four FlhD subunits. Each FlhC binds a FlhD dimer, forming a heterotrimer, and a hexamer assembles by dimerization of two heterotrimers.

It is found in the cytoplasm. In terms of biological role, functions in complex with FlhC as a master transcriptional regulator that regulates transcription of several flagellar and non-flagellar operons by binding to their promoter region. Activates expression of class 2 flagellar genes, including fliA, which is a flagellum-specific sigma factor that turns on the class 3 genes. Also regulates genes whose products function in a variety of physiological pathways. The protein is Flagellar transcriptional regulator FlhD of Ralstonia pickettii (strain 12J).